Here is an 809-residue protein sequence, read N- to C-terminus: Phenylalanine--tRNA ligase beta subunit (809 aa).

Positions 39-154 (APPTSKIVVG…EDTPVGQDIR (116 aa)) constitute a tRNA-binding domain. The region spanning 405 to 480 (PQRAPVKMRV…RIYGFEKIPA (76 aa)) is the B5 domain. Positions 458, 464, 467, and 468 each coordinate Mg(2+). An FDX-ACB domain is found at 707-808 (SKFPPVRRDI…RMARAGARLR (102 aa)).

This sequence belongs to the phenylalanyl-tRNA synthetase beta subunit family. Type 1 subfamily. In terms of assembly, tetramer of two alpha and two beta subunits. Mg(2+) is required as a cofactor.

The protein resides in the cytoplasm. The catalysed reaction is tRNA(Phe) + L-phenylalanine + ATP = L-phenylalanyl-tRNA(Phe) + AMP + diphosphate + H(+). This chain is Phenylalanine--tRNA ligase beta subunit, found in Burkholderia lata (strain ATCC 17760 / DSM 23089 / LMG 22485 / NCIMB 9086 / R18194 / 383).